A 127-amino-acid polypeptide reads, in one-letter code: Large ribosomal subunit protein bL20 (127 aa).

This sequence belongs to the bacterial ribosomal protein bL20 family.

Its function is as follows. Binds directly to 23S ribosomal RNA and is necessary for the in vitro assembly process of the 50S ribosomal subunit. It is not involved in the protein synthesizing functions of that subunit. The sequence is that of Large ribosomal subunit protein bL20 from Opitutus terrae (strain DSM 11246 / JCM 15787 / PB90-1).